Here is a 205-residue protein sequence, read N- to C-terminus: MLSTEFETPLWENLSRVCGIDEAGRGPLAGPVVAAAVAFPRHFKPTGILEKLDDSKKLTAELREELAPAIRESAEAWAVAVVDAEIIDRINILQATMLAMNQAVESLAATPELLLVDGNRFRPVLPIPYQTIVKGDSKVFSIAAASVLAKTRRDELMVAYAAEYPAYGFDLHFGYPTARHVEAIARHGRCAIHRKSFKLRKLGEK.

Residues 15–205 (SRVCGIDEAG…SFKLRKLGEK (191 aa)) enclose the RNase H type-2 domain. A divalent metal cation is bound by residues D21, E22, and D117.

The protein belongs to the RNase HII family. The cofactor is Mn(2+). It depends on Mg(2+) as a cofactor.

Its subcellular location is the cytoplasm. The enzyme catalyses Endonucleolytic cleavage to 5'-phosphomonoester.. In terms of biological role, endonuclease that specifically degrades the RNA of RNA-DNA hybrids. The polypeptide is Ribonuclease HII (Chlorobaculum parvum (strain DSM 263 / NCIMB 8327) (Chlorobium vibrioforme subsp. thiosulfatophilum)).